A 152-amino-acid polypeptide reads, in one-letter code: Small ribosomal subunit protein uS19z (152 aa).

This sequence belongs to the universal ribosomal protein uS19 family.

Its subcellular location is the cytoplasm. The protein is Small ribosomal subunit protein uS19z (RPS15B) of Arabidopsis thaliana (Mouse-ear cress).